The chain runs to 237 residues: Bax inhibitor 1 (237 aa).

Topologically, residues 1 to 29 (MNIFDRKINFDALLKFSHITPSTQQHLKK) are cytoplasmic. K7 is covalently cross-linked (Glycyl lysine isopeptide (Lys-Gly) (interchain with G-Cter in ubiquitin)). Residues 30 to 50 (VYASFALCMFVAAAGAYVHVV) traverse the membrane as a helical segment. The Lumenal portion of the chain corresponds to 51-52 (TR). Residues 53-73 (FIQAGLLSALGSLGLMIWLMA) traverse the membrane as a helical segment. Topologically, residues 74–86 (TPHSHETEQKRLG) are cytoplasmic. A helical membrane pass occupies residues 87–107 (LLAGFAFLTGVGLGPALDLCI). At 108-112 (AINPS) the chain is on the lumenal side. Residues 113–133 (ILPTAFMGTAMIFTCFTLSAL) form a helical membrane-spanning segment. The Cytoplasmic segment spans residues 134 to 139 (YARRRS). The chain crosses the membrane as a helical span at residues 140–160 (YLFLGGILMSAMSLMVLSSLG). Over 161–166 (NLFFGS) the chain is Lumenal. The chain crosses the membrane as a helical span at residues 167 to 187 (IWLFQANLYVGLVVMCGFVLF). Residues 188-206 (DTQLIIEKAENGDKDYIWH) lie on the Cytoplasmic side of the membrane. Residues 207–227 (CVDLFSDFVTLFRKLMMILAM) constitute an intramembrane region (helical). The Cytoplasmic portion of the chain corresponds to 228-237 (NEKDKKKEKK).

Belongs to the BI1 family. In terms of assembly, interacts with BCL2 and BCL2L1. Interacts with ERN1. Post-translationally, ubiquitinated by BFAR, leading to proteasomal degradation.

Its subcellular location is the endoplasmic reticulum membrane. Its function is as follows. Endoplasmic reticulum (ER)-resident protein that confers cellular protection as an anti-apoptotic protein by limiting multiple stress-inducing pathways surrounding the endoplasmic reticulum and mitochondria. Inhibits the activities of the key sensor for the endoplasmic reticulum unfolded protein response IRE1alpha/ERN1 both directly and by blocking BAX/BAK binding. Modulates ER calcium homeostasis by acting as a calcium-leak channel. Negatively regulates autophagy and autophagosome formation, especially during periods of nutrient deprivation, and reduces cell survival during starvation. The protein is Bax inhibitor 1 (TMBIM6) of Sus scrofa (Pig).